An 875-amino-acid polypeptide reads, in one-letter code: Alanine--tRNA ligase (875 aa).

Zn(2+) contacts are provided by histidine 565, histidine 569, cysteine 666, and histidine 670.

It belongs to the class-II aminoacyl-tRNA synthetase family. It depends on Zn(2+) as a cofactor.

Its subcellular location is the cytoplasm. It carries out the reaction tRNA(Ala) + L-alanine + ATP = L-alanyl-tRNA(Ala) + AMP + diphosphate. Functionally, catalyzes the attachment of alanine to tRNA(Ala) in a two-step reaction: alanine is first activated by ATP to form Ala-AMP and then transferred to the acceptor end of tRNA(Ala). Also edits incorrectly charged Ser-tRNA(Ala) and Gly-tRNA(Ala) via its editing domain. This chain is Alanine--tRNA ligase, found in Leptothrix cholodnii (strain ATCC 51168 / LMG 8142 / SP-6) (Leptothrix discophora (strain SP-6)).